A 1222-amino-acid chain; its full sequence is Kinesin-related protein 9 (1222 aa).

A compositionally biased stretch (polar residues) spans 1-25 (MDNNNNNFSTPKQPTINSTTGGQLR). Disordered regions lie at residues 1-55 (MDNN…ITNS), 75-165 (MDSL…STNI), and 188-343 (SSNT…TQPL). Low complexity predominate over residues 26–55 (SRSNSSPSTSSISTPRNGSTTATTSSITNS). The segment covering 75 to 85 (MDSLSTPMSQS) has biased composition (polar residues). Composition is skewed to low complexity over residues 122 to 165 (SFIS…STNI), 194 to 209 (SSLP…PLSN), 216 to 238 (NHHL…ISTT), and 254 to 325 (NLTT…RTPI). Polar residues predominate over residues 326 to 343 (QNFNSVGGVNITSKTQPL). Residues 350-719 (SIQAVCRFRP…LNFGQRAQSV (370 aa)) enclose the Kinesin motor domain. 438 to 445 (GQTGAGKT) lines the ATP pocket. A coiled-coil region spans residues 724 to 1026 (LQNVEESHSE…DTLTNKLEIQ (303 aa)). A disordered region spans residues 1144–1174 (NINNNNNIKNNNNNNKLKSKKVGSSSSSSSN). Residues 1183-1203 (ILFFLIILVILFFLMVAVGLT) form a helical membrane-spanning segment.

It belongs to the TRAFAC class myosin-kinesin ATPase superfamily. Kinesin family.

The protein resides in the membrane. It is found in the cytoplasm. Its subcellular location is the cytoskeleton. Functionally, microtubule-associated force-producing protein that plays a role in organelle transport. Its motor activity is directed toward the microtubule's plus end. This Dictyostelium discoideum (Social amoeba) protein is Kinesin-related protein 9 (kif9).